The primary structure comprises 154 residues: Small ribosomal subunit protein bS16 (154 aa).

The segment at 82-154 is disordered; that stretch reads VQERAARSNP…EAAAEESTEA (73 aa). Positions 92-109 are enriched in basic and acidic residues; sequence KKAEPGEKAKERAEERAA. Low complexity predominate over residues 110–129; that stretch reads KLAAAEEAANAPAEEPAAEP. Acidic residues predominate over residues 142–154; it reads PAEEAAAEESTEA.

This sequence belongs to the bacterial ribosomal protein bS16 family.

The chain is Small ribosomal subunit protein bS16 from Rhizorhabdus wittichii (strain DSM 6014 / CCUG 31198 / JCM 15750 / NBRC 105917 / EY 4224 / RW1) (Sphingomonas wittichii).